A 530-amino-acid chain; its full sequence is Per os infectivity factor 1 (530 aa).

Positions 1 to 15 (MHFAIILLFLLVIIA) are cleaved as a signal peptide.

Forms the PIF complex together with PIF2 and PIF3. The complex also interacts with per os infectivity factor PIF0.

Its subcellular location is the virion membrane. Its function is as follows. Per os infectivity factor that mediates the specific binding of occluded virions (ODV) to the host midgut target cells. This is Per os infectivity factor 1 from Autographa californica nuclear polyhedrosis virus (AcMNPV).